Reading from the N-terminus, the 366-residue chain is Alanine racemase (366 aa).

The active-site Proton acceptor; specific for D-alanine is the lysine 40. The residue at position 40 (lysine 40) is an N6-(pyridoxal phosphate)lysine. Residue arginine 136 coordinates substrate. The active-site Proton acceptor; specific for L-alanine is the tyrosine 263. Methionine 310 provides a ligand contact to substrate.

The protein belongs to the alanine racemase family. It depends on pyridoxal 5'-phosphate as a cofactor.

It catalyses the reaction L-alanine = D-alanine. It functions in the pathway amino-acid biosynthesis; D-alanine biosynthesis; D-alanine from L-alanine: step 1/1. In terms of biological role, catalyzes the interconversion of L-alanine and D-alanine. May also act on other amino acids. This chain is Alanine racemase (alr), found in Streptococcus pyogenes serotype M1.